The chain runs to 115 residues: uncharacterized protein (115 aa).

Residues 1–115 enclose the MSP domain; it reads MGVEISLDPP…ETVIKLSAAE (115 aa).

This is an uncharacterized protein from Caenorhabditis elegans.